We begin with the raw amino-acid sequence, 305 residues long: Putative monooxygenase p33MONOX (305 aa).

The tract at residues 37-56 (LEDPAPMTPPPSDMGSVPWK) is disordered. Thr-44 bears the Phosphothreonine mark. The short motif at 67–77 (LAKVEEGEASL) is the Flavin-containing monooxygenase motif element. 2 disordered regions span residues 158–236 (QSGE…KYDS) and 259–305 (QANR…PTGF). Residues 169 to 183 (PASAQSTPSTTPHSS) show a composition bias toward low complexity. A Phosphothreonine modification is found at Thr-175. Residues Ser-182 and Ser-183 each carry the phosphoserine modification. Positions 193–210 (TSGSSTALPGPNPSTMDS) are enriched in polar residues.

It belongs to the P33MONOX family. As to quaternary structure, interacts with NELFB, NOL12 and PRNP. As to expression, down-regulated in the occipital lobe of an early stage Alzheimer disease patients.

The protein localises to the cytoplasm. In terms of biological role, potential NADPH-dependent oxidoreductase. May be involved in the regulation of neuronal survival, differentiation and axonal outgrowth. The chain is Putative monooxygenase p33MONOX (KIAA1191) from Homo sapiens (Human).